A 508-amino-acid chain; its full sequence is Histidine ammonia-lyase (508 aa).

A cross-link (5-imidazolinone (Ala-Gly)) is located at residues 143-145 (ASG). Ser-144 carries the post-translational modification 2,3-didehydroalanine (Ser).

The protein belongs to the PAL/histidase family. Contains an active site 4-methylidene-imidazol-5-one (MIO), which is formed autocatalytically by cyclization and dehydration of residues Ala-Ser-Gly.

It is found in the cytoplasm. It catalyses the reaction L-histidine = trans-urocanate + NH4(+). It functions in the pathway amino-acid degradation; L-histidine degradation into L-glutamate; N-formimidoyl-L-glutamate from L-histidine: step 1/3. This is Histidine ammonia-lyase from Klebsiella pneumoniae subsp. pneumoniae (strain ATCC 700721 / MGH 78578).